The primary structure comprises 771 residues: Putative 8-amino-7-oxononanoate synthase 2 (771 aa).

Positions 1 to 418 (MPTGLGYDFL…TVKAAELGEI (418 aa)) are unknown. A substrate-binding site is contributed by R407. Positions 419-771 (VLLGTNSYLG…EDLTPQGAAL (353 aa)) are KAPA synthase. A pyridoxal 5'-phosphate-binding site is contributed by 485–486 (GY). Substrate is bound at residue H510. Residues S556 and 581-584 (DESH) contribute to the pyridoxal 5'-phosphate site. K615 is subject to N6-(pyridoxal phosphate)lysine.

It in the C-terminal section; belongs to the class-II pyridoxal-phosphate-dependent aminotransferase family. BioF subfamily. Pyridoxal 5'-phosphate serves as cofactor.

It catalyses the reaction 6-carboxyhexanoyl-[ACP] + L-alanine + H(+) = (8S)-8-amino-7-oxononanoate + holo-[ACP] + CO2. Catalyzes the decarboxylative condensation of pimeloyl-[acyl-carrier protein] and L-alanine to produce 8-amino-7-oxononanoate (AON), [acyl-carrier protein], and carbon dioxide. This is Putative 8-amino-7-oxononanoate synthase 2 (bioF2) from Mycobacterium tuberculosis (strain CDC 1551 / Oshkosh).